The following is a 206-amino-acid chain: Adenylate kinase (206 aa).

10-15 (GAGKGT) lines the ATP pocket. Positions 30-59 (STGDMLRAAVAAGTPVGLKAKDIMASGGLV) are NMP. Residues T31, R36, 57 to 59 (GLV), 85 to 88 (GFPR), and Q92 each bind AMP. The LID stretch occupies residues 126–142 (NRVAETTARGEQVRADD). ATP is bound at residue R127. Residues R139 and R150 each coordinate AMP. An ATP-binding site is contributed by M178.

It belongs to the adenylate kinase family. In terms of assembly, monomer.

It localises to the cytoplasm. It catalyses the reaction AMP + ATP = 2 ADP. It functions in the pathway purine metabolism; AMP biosynthesis via salvage pathway; AMP from ADP: step 1/1. In terms of biological role, catalyzes the reversible transfer of the terminal phosphate group between ATP and AMP. Plays an important role in cellular energy homeostasis and in adenine nucleotide metabolism. In Nitrobacter winogradskyi (strain ATCC 25391 / DSM 10237 / CIP 104748 / NCIMB 11846 / Nb-255), this protein is Adenylate kinase.